The sequence spans 448 residues: Carbon catabolite repressor protein 4 homolog 3 (448 aa).

Over residues 50 to 67 (SSTSGPSDSNPESSSNRS) the composition is skewed to low complexity. The segment at 50 to 92 (SSTSGPSDSNPESSSNRSYSRRWQNPLPRRQHPDQIPSSQIAR) is disordered. Glu-162 is a Mg(2+) binding site.

It belongs to the CCR4/nocturin family. In terms of assembly, component of the CCR4-NOT complex, at least composed of CRR4 and CAF1 proteins. Mg(2+) serves as cofactor.

Its subcellular location is the nucleus. It localises to the cytoplasm. The catalysed reaction is Exonucleolytic cleavage of poly(A) to 5'-AMP.. In terms of biological role, acts as a catalytic component of the CCR4-NOT core complex, which in the nucleus seems to be a general transcription factor, and in the cytoplasm the major mRNA deadenylase involved in mRNA turnover. In Arabidopsis thaliana (Mouse-ear cress), this protein is Carbon catabolite repressor protein 4 homolog 3 (CCR4-3).